We begin with the raw amino-acid sequence, 361 residues long: Biotin synthase (361 aa).

Positions 14 to 38 (AQRTPEPLPPTSQGLARPSHDVVRG) are disordered. The 230-residue stretch at 86–315 (HKGGPAALCG…ARDILVCGGR (230 aa)) folds into the Radical SAM core domain. C104, C108, and C111 together coordinate [4Fe-4S] cluster. [2Fe-2S] cluster contacts are provided by C180 and C240.

The protein belongs to the radical SAM superfamily. Biotin synthase family. As to quaternary structure, homodimer. It depends on [4Fe-4S] cluster as a cofactor. [2Fe-2S] cluster serves as cofactor.

The enzyme catalyses (4R,5S)-dethiobiotin + (sulfur carrier)-SH + 2 reduced [2Fe-2S]-[ferredoxin] + 2 S-adenosyl-L-methionine = (sulfur carrier)-H + biotin + 2 5'-deoxyadenosine + 2 L-methionine + 2 oxidized [2Fe-2S]-[ferredoxin]. Its pathway is cofactor biosynthesis; biotin biosynthesis; biotin from 7,8-diaminononanoate: step 2/2. Catalyzes the conversion of dethiobiotin (DTB) to biotin by the insertion of a sulfur atom into dethiobiotin via a radical-based mechanism. The sequence is that of Biotin synthase from Nitratidesulfovibrio vulgaris (strain DP4) (Desulfovibrio vulgaris).